A 462-amino-acid polypeptide reads, in one-letter code: L-seryl-tRNA(Sec) selenium transferase (462 aa).

An N6-(pyridoxal phosphate)lysine modification is found at Lys294.

This sequence belongs to the SelA family. As to quaternary structure, homodecamer; pentamer of dimers. Binds only one seryl-tRNA(Sec) per dimer. Pyridoxal 5'-phosphate is required as a cofactor.

The protein localises to the cytoplasm. It catalyses the reaction L-seryl-tRNA(Sec) + selenophosphate + H(+) = L-selenocysteinyl-tRNA(Sec) + phosphate. Its pathway is aminoacyl-tRNA biosynthesis; selenocysteinyl-tRNA(Sec) biosynthesis; selenocysteinyl-tRNA(Sec) from L-seryl-tRNA(Sec) (bacterial route): step 1/1. In terms of biological role, converts seryl-tRNA(Sec) to selenocysteinyl-tRNA(Sec) required for selenoprotein biosynthesis. The polypeptide is L-seryl-tRNA(Sec) selenium transferase (Yersinia enterocolitica serotype O:8 / biotype 1B (strain NCTC 13174 / 8081)).